The primary structure comprises 172 residues: Large ribosomal subunit protein uL10 (172 aa).

This sequence belongs to the universal ribosomal protein uL10 family. In terms of assembly, part of the ribosomal stalk of the 50S ribosomal subunit. The N-terminus interacts with L11 and the large rRNA to form the base of the stalk. The C-terminus forms an elongated spine to which L12 dimers bind in a sequential fashion forming a multimeric L10(L12)X complex.

Functionally, forms part of the ribosomal stalk, playing a central role in the interaction of the ribosome with GTP-bound translation factors. This is Large ribosomal subunit protein uL10 from Bartonella tribocorum (strain CIP 105476 / IBS 506).